Consider the following 320-residue polypeptide: Malate dehydrogenase (320 aa).

Residues 10-15 (GSGMIG) and aspartate 34 contribute to the NAD(+) site. Residues arginine 83 and arginine 89 each coordinate substrate. Residues asparagine 96 and 119–121 (ITN) contribute to the NAD(+) site. Residues asparagine 121 and arginine 152 each contribute to the substrate site. Histidine 176 (proton acceptor) is an active-site residue.

This sequence belongs to the LDH/MDH superfamily. MDH type 3 family.

The catalysed reaction is (S)-malate + NAD(+) = oxaloacetate + NADH + H(+). Catalyzes the reversible oxidation of malate to oxaloacetate. This is Malate dehydrogenase from Rhizobium etli (strain CIAT 652).